A 34-amino-acid polypeptide reads, in one-letter code: Tau-theraphotoxin-Pc1c (34 aa).

Disulfide bonds link Cys-2-Cys-16, Cys-9-Cys-21, and Cys-15-Cys-28. Position 34 is a phenylalanine amide (Phe-34).

Belongs to the neurotoxin 10 (Hwtx-1) family. 62 (Vatx) subfamily. Expressed by the venom gland.

It is found in the secreted. Functionally, selectively activates mammalian TRPV1, or capsaicin receptor, a non-selective cation channel expressed by sensory neurons of the pain pathway. Is more potent than VaTx1 and VaTx2. Interacts with distinct regions of the channel than capsaicin, since it only acts on the extracellular face of the channel, and capsaicin binds to the cytosolic side. Also activates avian TRPV1, which is insensitive to capsaicin. In mice, elicits pain-related behaviors, such as licking and flinching of the affected limb. The paw of toxin-injected mice shows substantial edema. The chain is Tau-theraphotoxin-Pc1c from Psalmopoeus cambridgei (Trinidad chevron tarantula).